A 161-amino-acid chain; its full sequence is MTRGPVRLDVAISYALPRAGLPAAVSFRKWVAAALKGRIREADLAIRVVDAKEGQSLNRHYRGKDYATNVLSFPADVPEGLPKGVKFPLLGDLVICAPVVAREADEQGKALNAHYAHLTVHGVLHLLGWDHEDDKEAEAMEQLEREILAELGIADPYAGER.

Residues His-121, His-125, and His-131 each contribute to the Zn(2+) site.

Belongs to the endoribonuclease YbeY family. Requires Zn(2+) as cofactor.

It localises to the cytoplasm. In terms of biological role, single strand-specific metallo-endoribonuclease involved in late-stage 70S ribosome quality control and in maturation of the 3' terminus of the 16S rRNA. The chain is Endoribonuclease YbeY from Stenotrophomonas maltophilia (strain R551-3).